A 418-amino-acid chain; its full sequence is BTB and MATH domain-containing protein 41 (418 aa).

The disordered stretch occupies residues 1-33; sequence MEINNGAQPENAAVSIPSRSPSGKSEKRKSPSI. The MATH domain maps to 45–173; that stretch reads SFTNYWSVER…NDILTIGCEL (129 aa). The 62-residue stretch at 232–293 folds into the BTB domain; the sequence is SDFIIVASCG…TLDVLLRHMY (62 aa).

Interacts with cul-3.

It participates in protein modification; protein ubiquitination. Its function is as follows. Probable substrate-specific adapter of an E3 ubiquitin-protein ligase complex which mediates the ubiquitination and subsequent proteasomal degradation of target proteins. The chain is BTB and MATH domain-containing protein 41 (bath-41) from Caenorhabditis elegans.